A 695-amino-acid polypeptide reads, in one-letter code: Pre-mRNA-splicing factor CLF1 (695 aa).

12 HAT repeats span residues 41–73 (DVQR…FEIE), 75–107 (HDMR…SELK), 109–141 (GYIN…VEES), 143–174 (AHFD…FEVR), 176–207 (ERYE…FEVR), 296–328 (TIIL…LLEN), 333–365 (LVME…IWIK), 375–412 (NDIP…FEIR), 414–445 (DNLE…LETK), 447–479 (REFD…FEDS), 521–553 (QNFD…KKLT), and 591–629 (NNKD…FEGQ).

This sequence belongs to the crooked-neck family. Associated with the spliceosome.

Its subcellular location is the nucleus. Involved in pre-mRNA splicing and cell cycle progression. Required for the spliceosome assembly and initiation of the DNA replication. In Candida glabrata (strain ATCC 2001 / BCRC 20586 / JCM 3761 / NBRC 0622 / NRRL Y-65 / CBS 138) (Yeast), this protein is Pre-mRNA-splicing factor CLF1 (CLF1).